The sequence spans 89 residues: Small ribosomal subunit protein uS15 (89 aa).

The protein belongs to the universal ribosomal protein uS15 family. Part of the 30S ribosomal subunit. Forms a bridge to the 50S subunit in the 70S ribosome, contacting the 23S rRNA.

Functionally, one of the primary rRNA binding proteins, it binds directly to 16S rRNA where it helps nucleate assembly of the platform of the 30S subunit by binding and bridging several RNA helices of the 16S rRNA. In terms of biological role, forms an intersubunit bridge (bridge B4) with the 23S rRNA of the 50S subunit in the ribosome. In Cupriavidus pinatubonensis (strain JMP 134 / LMG 1197) (Cupriavidus necator (strain JMP 134)), this protein is Small ribosomal subunit protein uS15.